Here is a 669-residue protein sequence, read N- to C-terminus: Cell surface receptor daf-1 (669 aa).

The N-terminal stretch at 1-19 (MRIRHVVFCLLALVYGAET) is a signal peptide. Residues 20–170 (SDDDLDERTN…APGPQQSSTW (151 aa)) are Extracellular-facing. 4 N-linked (GlcNAc...) asparagine glycosylation sites follow: Asn49, Asn79, Asn133, and Asn154. A helical membrane pass occupies residues 171 to 191 (LILTILALLTFIVLLGIAIFL). Topologically, residues 192–669 (TRKSWEAKFD…NDDSSRPLLG (478 aa)) are cytoplasmic. The 31-residue stretch at 262–292 (NNMKDMLDVLEETSGSGMGPTTLHKLTIGGQ) folds into the GS domain. Positions 293–593 (IRLTGRVGSG…KRMDERQQLL (301 aa)) constitute a Protein kinase domain. Residues 299-307 (VGSGRFGNV) and Lys320 each bind ATP. Asp423 acts as the Proton acceptor in catalysis. Composition is skewed to basic and acidic residues over residues 611-624 (DRKILGPQKPKDES) and 633-650 (VQKEIDREDEQENWRETA). Residues 611 to 669 (DRKILGPQKPKDESPANGAPRIVQKEIDREDEQENWRETAKTPNGHISSNDDSSRPLLG) form a disordered region. A compositionally biased stretch (polar residues) spans 651–661 (KTPNGHISSND).

Belongs to the protein kinase superfamily. TKL Ser/Thr protein kinase family. TGFB receptor subfamily. As to quaternary structure, may interact with daf-4 to regulate dauer larva development. As to expression, head and ventral nerve cord from embryos to adults. Expressed in many sensory neurons. Subset of head neurons show coexpression with daf-4 when dauer/nondauer decision is made. Also expressed in non-neuronal cells: membraneous sheath surrounding the distal end of the intestine and in the distal tip cell of the gonad.

It localises to the membrane. The enzyme catalyses L-threonyl-[receptor-protein] + ATP = O-phospho-L-threonyl-[receptor-protein] + ADP + H(+). It carries out the reaction L-seryl-[receptor-protein] + ATP = O-phospho-L-seryl-[receptor-protein] + ADP + H(+). Its function is as follows. Probably involved in a TGF-beta pathway. May be a receptor for TGF-beta-like ligand daf-7. Controls the decision of whether or not larvae enter a developmentally arrested state, known as dauer, in response to environmental conditions. Involved in regulating entry into quiescence triggered by satiety. Involved in sensitivity to CO2 levels. In AWC neurons, acts to promote expression of srsx-3, a member of the GPCR family. The sequence is that of Cell surface receptor daf-1 (daf-1) from Caenorhabditis elegans.